A 61-amino-acid polypeptide reads, in one-letter code: Large ribosomal subunit protein uL30 (61 aa).

This sequence belongs to the universal ribosomal protein uL30 family. As to quaternary structure, part of the 50S ribosomal subunit.

This chain is Large ribosomal subunit protein uL30, found in Shewanella piezotolerans (strain WP3 / JCM 13877).